Consider the following 277-residue polypeptide: Large ribosomal subunit protein uL2 (277 aa).

Disordered stretches follow at residues 37–60 (KNST…GHKH) and 223–264 (VVMN…NKRT). Positions 39–49 (STAGRNNNGHI) are enriched in polar residues. The span at 50–60 (TTRHKGGGHKH) shows a compositional bias: basic residues. Residues 229 to 244 (DHPHGGGEGRTGEARE) show a composition bias toward basic and acidic residues.

This sequence belongs to the universal ribosomal protein uL2 family. As to quaternary structure, part of the 50S ribosomal subunit. Forms a bridge to the 30S subunit in the 70S ribosome.

Its function is as follows. One of the primary rRNA binding proteins. Required for association of the 30S and 50S subunits to form the 70S ribosome, for tRNA binding and peptide bond formation. It has been suggested to have peptidyltransferase activity; this is somewhat controversial. Makes several contacts with the 16S rRNA in the 70S ribosome. The polypeptide is Large ribosomal subunit protein uL2 (Neisseria meningitidis serogroup B (strain ATCC BAA-335 / MC58)).